A 248-amino-acid polypeptide reads, in one-letter code: Protein-lysine N-methyltransferase EFM5 (248 aa).

The protein belongs to the class I-like SAM-binding methyltransferase superfamily. EFM5 family.

The protein resides in the cytoplasm. In terms of biological role, S-adenosyl-L-methionine-dependent protein-lysine N-methyltransferase that trimethylates elongation factor 1-alpha (TEF1 and TEF2) at 'Lys-79'. Required for replication of Brome mosaic virus (BMV). In Saccharomyces cerevisiae (strain ATCC 204508 / S288c) (Baker's yeast), this protein is Protein-lysine N-methyltransferase EFM5.